The chain runs to 350 residues: 4-hydroxy-3-methylbut-2-enyl diphosphate reductase (350 aa).

[4Fe-4S] cluster is bound at residue cysteine 36. (2E)-4-hydroxy-3-methylbut-2-enyl diphosphate is bound by residues histidine 65 and histidine 101. Residues histidine 65 and histidine 101 each coordinate dimethylallyl diphosphate. 2 residues coordinate isopentenyl diphosphate: histidine 65 and histidine 101. Cysteine 123 contacts [4Fe-4S] cluster. Residue histidine 151 coordinates (2E)-4-hydroxy-3-methylbut-2-enyl diphosphate. Histidine 151 provides a ligand contact to dimethylallyl diphosphate. Residue histidine 151 participates in isopentenyl diphosphate binding. Catalysis depends on glutamate 153, which acts as the Proton donor. Threonine 192 is a (2E)-4-hydroxy-3-methylbut-2-enyl diphosphate binding site. Residue cysteine 222 coordinates [4Fe-4S] cluster. Residues serine 250, serine 251, asparagine 252, and serine 295 each coordinate (2E)-4-hydroxy-3-methylbut-2-enyl diphosphate. Residues serine 250, serine 251, asparagine 252, and serine 295 each coordinate dimethylallyl diphosphate. Residues serine 250, serine 251, asparagine 252, and serine 295 each coordinate isopentenyl diphosphate.

Belongs to the IspH family. [4Fe-4S] cluster serves as cofactor.

The catalysed reaction is isopentenyl diphosphate + 2 oxidized [2Fe-2S]-[ferredoxin] + H2O = (2E)-4-hydroxy-3-methylbut-2-enyl diphosphate + 2 reduced [2Fe-2S]-[ferredoxin] + 2 H(+). It carries out the reaction dimethylallyl diphosphate + 2 oxidized [2Fe-2S]-[ferredoxin] + H2O = (2E)-4-hydroxy-3-methylbut-2-enyl diphosphate + 2 reduced [2Fe-2S]-[ferredoxin] + 2 H(+). The protein operates within isoprenoid biosynthesis; dimethylallyl diphosphate biosynthesis; dimethylallyl diphosphate from (2E)-4-hydroxy-3-methylbutenyl diphosphate: step 1/1. It participates in isoprenoid biosynthesis; isopentenyl diphosphate biosynthesis via DXP pathway; isopentenyl diphosphate from 1-deoxy-D-xylulose 5-phosphate: step 6/6. Catalyzes the conversion of 1-hydroxy-2-methyl-2-(E)-butenyl 4-diphosphate (HMBPP) into a mixture of isopentenyl diphosphate (IPP) and dimethylallyl diphosphate (DMAPP). Acts in the terminal step of the DOXP/MEP pathway for isoprenoid precursor biosynthesis. The sequence is that of 4-hydroxy-3-methylbut-2-enyl diphosphate reductase from Rhizobium meliloti (strain 1021) (Ensifer meliloti).